The following is a 516-amino-acid chain: BAR/IMD domain-containing adapter protein 2-like 2 (516 aa).

One can recognise an IMD domain in the interval Met-1–Leu-227. Residues Ala-200 to Leu-273 are disordered. Basic and acidic residues predominate over residues Asp-201–Ser-212. Positions Gln-226–Gln-236 are enriched in polar residues. A compositionally biased stretch (basic and acidic residues) spans Gly-238–Leu-247. The span at Arg-249–Ser-270 shows a compositional bias: low complexity. Positions Gly-274 to Asp-337 constitute an SH3 domain. The span at Leu-355–Val-376 shows a compositional bias: polar residues. The segment at Leu-355–Gln-516 is disordered. Residues Pro-434–Asn-450 show a composition bias toward basic and acidic residues. Residues Leu-454–Pro-465 are compositionally biased toward pro residues.

It is found in the cell membrane. Functionally, phosphoinositides-binding protein that induces the formation of planar or gently curved membrane structures. This Danio rerio (Zebrafish) protein is BAR/IMD domain-containing adapter protein 2-like 2 (baiap2l2).